A 142-amino-acid polypeptide reads, in one-letter code: Small ribosomal subunit protein uS12 (142 aa).

Positions 1–44 are disordered; it reads MANGKYAARKLKKDRQKHRWSDTDYARRERGLGKKSDPLEGAPQ. Positions 7–18 are enriched in basic residues; the sequence is AARKLKKDRQKH. The span at 19-38 shows a compositional bias: basic and acidic residues; it reads RWSDTDYARRERGLGKKSDP.

This sequence belongs to the universal ribosomal protein uS12 family. In terms of assembly, part of the 30S ribosomal subunit.

In terms of biological role, with S4 and S5 plays an important role in translational accuracy. Located at the interface of the 30S and 50S subunits. The chain is Small ribosomal subunit protein uS12 from Haloarcula marismortui (strain ATCC 43049 / DSM 3752 / JCM 8966 / VKM B-1809) (Halobacterium marismortui).